Here is a 172-residue protein sequence, read N- to C-terminus: Bifunctional protein PyrR (172 aa).

A PRPP-binding motif is present at residues 90 to 102 (LVLVDDVLMSGRT).

The protein belongs to the purine/pyrimidine phosphoribosyltransferase family. PyrR subfamily.

It carries out the reaction UMP + diphosphate = 5-phospho-alpha-D-ribose 1-diphosphate + uracil. Regulates the transcription of the pyrimidine nucleotide (pyr) operon in response to exogenous pyrimidines. Functionally, also displays a weak uracil phosphoribosyltransferase activity which is not physiologically significant. The chain is Bifunctional protein PyrR from Pseudomonas entomophila (strain L48).